We begin with the raw amino-acid sequence, 403 residues long: Cysteine desulfurase IscS (403 aa).

Pyridoxal 5'-phosphate contacts are provided by residues 75 to 76, Asn-155, Gln-183, and 203 to 205; these read AT and SAH. N6-(pyridoxal phosphate)lysine is present on Lys-206. Thr-243 contributes to the pyridoxal 5'-phosphate binding site. The active-site Cysteine persulfide intermediate is Cys-328. Cys-328 is a binding site for [2Fe-2S] cluster.

This sequence belongs to the class-V pyridoxal-phosphate-dependent aminotransferase family. NifS/IscS subfamily. Homodimer. Forms a heterotetramer with IscU, interacts with other sulfur acceptors. Pyridoxal 5'-phosphate serves as cofactor.

The protein localises to the cytoplasm. The enzyme catalyses (sulfur carrier)-H + L-cysteine = (sulfur carrier)-SH + L-alanine. It participates in cofactor biosynthesis; iron-sulfur cluster biosynthesis. In terms of biological role, master enzyme that delivers sulfur to a number of partners involved in Fe-S cluster assembly, tRNA modification or cofactor biosynthesis. Catalyzes the removal of elemental sulfur atoms from cysteine to produce alanine. Functions as a sulfur delivery protein for Fe-S cluster synthesis onto IscU, an Fe-S scaffold assembly protein, as well as other S acceptor proteins. In Psychromonas ingrahamii (strain DSM 17664 / CCUG 51855 / 37), this protein is Cysteine desulfurase IscS.